Here is a 284-residue protein sequence, read N- to C-terminus: Pantothenate synthetase (284 aa).

30 to 37 (MGNLHDGH) lines the ATP pocket. His37 acts as the Proton donor in catalysis. A (R)-pantoate-binding site is contributed by Gln61. Gln61 lines the beta-alanine pocket. Residue 149 to 152 (GEKD) coordinates ATP. Position 155 (Gln155) interacts with (R)-pantoate. ATP is bound by residues Ile178 and 186 to 189 (LSSR).

This sequence belongs to the pantothenate synthetase family. Homodimer.

The protein localises to the cytoplasm. It carries out the reaction (R)-pantoate + beta-alanine + ATP = (R)-pantothenate + AMP + diphosphate + H(+). The protein operates within cofactor biosynthesis; (R)-pantothenate biosynthesis; (R)-pantothenate from (R)-pantoate and beta-alanine: step 1/1. Catalyzes the condensation of pantoate with beta-alanine in an ATP-dependent reaction via a pantoyl-adenylate intermediate. This Salmonella paratyphi A (strain ATCC 9150 / SARB42) protein is Pantothenate synthetase.